The sequence spans 445 residues: Tol-Pal system protein TolB (445 aa).

A signal peptide spans 1–26; that stretch reads MLNRRNFIRTTSALAASTALPGYAFG.

Belongs to the TolB family. The Tol-Pal system is composed of five core proteins: the inner membrane proteins TolA, TolQ and TolR, the periplasmic protein TolB and the outer membrane protein Pal. They form a network linking the inner and outer membranes and the peptidoglycan layer.

It is found in the periplasm. In terms of biological role, part of the Tol-Pal system, which plays a role in outer membrane invagination during cell division and is important for maintaining outer membrane integrity. The sequence is that of Tol-Pal system protein TolB from Jannaschia sp. (strain CCS1).